The primary structure comprises 514 residues: Putative exoglucanase type C (514 aa).

The signal sequence occupies residues 1 to 17 (MYRIVATASALIAAARA). Positions 18-439 (QQVCSLNTET…RDVPNSKVSF (422 aa)) are catalytic. Catalysis depends on Glu229, which acts as the Nucleophile. The active-site Proton donor is Glu234. A glycan (N-linked (GlcNAc...) asparagine) is linked at Asn287. Residues 408 to 424 (STKVGSQRGSCATTSGK) show a composition bias toward polar residues. Disordered regions lie at residues 408–433 (STKV…RDVP) and 448–485 (GSTY…QWGQ). The segment at 440 to 482 (SNIKFGPIGSTYKSDGTTPNPPASSSTTGSSTPTNPPAGSVDQ) is linker. Over residues 462-479 (ASSSTTGSSTPTNPPAGS) the composition is skewed to low complexity. The CBM1 domain occupies 478 to 514 (GSVDQWGQCGGQNYSGPTTCKSPFTCKKINDFYSQCQ). Cystine bridges form between Cys486-Cys503 and Cys497-Cys513. N-linked (GlcNAc...) asparagine glycosylation is present at Asn490.

This sequence belongs to the glycosyl hydrolase 7 (cellulase C) family.

It catalyses the reaction Hydrolysis of (1-&gt;4)-beta-D-glucosidic linkages in cellulose and cellotetraose, releasing cellobiose from the non-reducing ends of the chains.. In Fusarium oxysporum (Fusarium vascular wilt), this protein is Putative exoglucanase type C.